A 402-amino-acid chain; its full sequence is Tumor necrosis factor receptor superfamily member 11B (402 aa).

Residues 1-21 form the signal peptide; sequence MNKLLCCALVFLDISIKWTTQ. TNFR-Cys repeat units lie at residues 24-62, 64-105, 106-142, and 144-185; these read FPPKYLHYDPESSRQLMCDKCPPGTFLKQPCTARRKTVC, PCPD…NRVC, ECEEGRYLELEFCLKHRSCPPGFGVLHPGTPERNTVC, and RCPD…DNIC. Cystine bridges form between Cys41–Cys54, Cys44–Cys62, Cys65–Cys80, Cys83–Cys97, Cys87–Cys105, Cys107–Cys118, Cys124–Cys142, and Cys145–Cys160. N-linked (GlcNAc...) asparagine glycosylation is found at Asn165 and Asn178. Residues Cys166 and Cys185 are joined by a disulfide bond. Death domains lie at 198–269 and 270–365; these read IDMT…DMVK and KIIQ…VIQS.

Homodimer. Interacts with TNFSF10 and TNFSF11. Post-translationally, N-glycosylated. Contains sialic acid residues.

The protein resides in the secreted. Functionally, acts as a decoy receptor for TNFSF11/RANKL and thereby neutralizes its function in osteoclastogenesis. Inhibits the activation of osteoclasts and promotes osteoclast apoptosis. Bone homeostasis seems to depend on the local ratio between TNFSF11 and TNFRSF11B. May also play a role in preventing arterial calcification. May act as decoy receptor for TNFSF10/TRAIL and protect against apoptosis. TNFSF10/TRAIL binding blocks the inhibition of osteoclastogenesis. In Bos taurus (Bovine), this protein is Tumor necrosis factor receptor superfamily member 11B (TNFRSF11B).